The primary structure comprises 3413 residues: Protein pecanex (3413 aa).

The next 2 helical transmembrane spans lie at 33 to 53 (VVHL…YLYF) and 57 to 77 (WLTW…VKLA). N-linked (GlcNAc...) asparagine glycosylation is present at Asn164. Residues 182 to 195 (GSQQDQQSLAGSAS) are compositionally biased toward low complexity. Disordered stretches follow at residues 182 to 213 (GSQQ…STSA) and 235 to 314 (GSSA…ENKL). Over residues 196–213 (VSKSIRSTGPGGNSSTSA) the composition is skewed to polar residues. Asn208 is a glycosylation site (N-linked (GlcNAc...) asparagine). The span at 302-312 (AAAAANSNAEN) shows a compositional bias: low complexity. Asn317 is a glycosylation site (N-linked (GlcNAc...) asparagine). 4 disordered regions span residues 327–363 (PSFL…GDAP), 379–403 (LVNP…RLKH), 540–609 (PGTG…GTGG), and 625–651 (PSVS…NPLP). The span at 330-354 (LHSQPTNKARGQTNPRQHFITSAPS) shows a compositional bias: polar residues. Positions 392–402 (RSSETHDERLK) are enriched in basic and acidic residues. A compositionally biased stretch (gly residues) spans 541 to 559 (GTGGSVTGGGGAAGGGGSA). 2 N-linked (GlcNAc...) asparagine glycosylation sites follow: Asn569 and Asn581. Positions 569-582 (NATSYKHGSSQSNK) are enriched in polar residues. Residues 599 to 609 (GTSGGAGGTGG) show a composition bias toward gly residues. Polar residues predominate over residues 625-634 (PSVSNLSPHP). Asn685 carries N-linked (GlcNAc...) asparagine glycosylation. Basic and acidic residues predominate over residues 720–730 (EKTAHEEHGDD). Disordered regions lie at residues 720-745 (EKTA…DDEV), 816-873 (HHHS…NRQP), 886-921 (RQEL…DCEQ), and 1002-1021 (KQTK…HSIS). The span at 816 to 826 (HHHSHLHHHKA) shows a compositional bias: basic residues. A compositionally biased stretch (low complexity) spans 828–846 (SVEGAGPSGGSVAVGVSAG). Residues 847-856 (NDDEDEETED) are compositionally biased toward acidic residues. Residue Asn857 is glycosylated (N-linked (GlcNAc...) asparagine). Low complexity predominate over residues 1008 to 1021 (SRNSSSSNSTHSIS). Asn1010, Asn1015, Asn1069, and Asn1199 each carry an N-linked (GlcNAc...) asparagine glycan. 2 consecutive transmembrane segments (helical) span residues 1315–1335 (MHVL…AAIL) and 1343–1363 (LCAL…VKSV). An N-linked (GlcNAc...) asparagine glycan is attached at Asn1375. A run of 4 helical transmembrane segments spans residues 1376-1396 (KTVA…LLLL), 1423-1443 (VVAL…IIFS), 1474-1494 (LLGS…LYGP), and 1504-1524 (GTQY…GYHL). Residue Asn1572 is glycosylated (N-linked (GlcNAc...) asparagine). 3 disordered regions span residues 1577-1675 (QLTT…TGEP), 1722-1744 (DKIS…GAGT), and 1760-1813 (AEAE…LPDP). Basic and acidic residues-rich tracts occupy residues 1587–1598 (RQTDVKTEHEQI) and 1607–1620 (TVNE…HGAD). The span at 1639–1666 (KTSSLGSSQQTLGKTISSSKRAITASSS) shows a compositional bias: low complexity. Polar residues predominate over residues 1725-1738 (SSSSATNPGDMSTL). A run of 5 repeats spans residues 1776 to 1777 (GT), 1778 to 1779 (GT), 1780 to 1781 (GT), 1782 to 1783 (GT), and 1784 to 1785 (GT). The tract at residues 1776–1785 (GTGTGTGTGT) is 5 X 2 AA tandem repeats of G-T. 2 N-linked (GlcNAc...) asparagine glycosylation sites follow: Asn1791 and Asn1804. Residues 1799–1808 (GNTNSNGTGN) show a composition bias toward low complexity. 5 helical membrane passes run 1830–1850 (LVVM…TVFT), 1856–1876 (LNVV…YIVP), 1914–1934 (LYIY…AISS), 1940–1960 (QLIV…ICAL), and 1976–1996 (IIIF…ETFI). The segment at 2344–2463 (SMGGAPPAQA…HSFANISRQT (120 aa)) is disordered. Residues 2346 to 2370 (GGAPPAQAPAAAGGASSAPATAGVA) are compositionally biased toward low complexity. 2 N-linked (GlcNAc...) asparagine glycosylation sites follow: Asn2380 and Asn2387. Low complexity predominate over residues 2389–2411 (SAHGGQAGPSSGQSKSQSQQQLR). Gly residues predominate over residues 2437–2447 (GTGGVTGGGGD). Residues 2449 to 2463 (QLSSSHSFANISRQT) show a composition bias toward polar residues. Asn2458, Asn2619, and Asn2717 each carry an N-linked (GlcNAc...) asparagine glycan. Disordered stretches follow at residues 2908 to 2997 (LNRE…SSGS) and 3198 to 3242 (ESST…GDDG). The segment covering 2940–2956 (RRPEVGSSRGRDHERRA) has biased composition (basic and acidic residues). Residue Asn3246 is glycosylated (N-linked (GlcNAc...) asparagine). The tract at residues 3295–3413 (AEESKEKGTA…NGESEAGTTV (119 aa)) is disordered. Acidic residues predominate over residues 3310 to 3323 (EGEEGVGEMEIEPE). The segment covering 3364 to 3377 (TSSTSSAKSTSSPS) has biased composition (low complexity). The span at 3380 to 3406 (QEEEDAVDPEETPELASEESPSDENGE) shows a compositional bias: acidic residues.

It belongs to the pecanex family.

The protein localises to the membrane. Functionally, involved in neurogenesis. The chain is Protein pecanex (pcx) from Drosophila melanogaster (Fruit fly).